The chain runs to 429 residues: Glucose-6-phosphate isomerase (429 aa).

Glu-282 serves as the catalytic Proton donor. Catalysis depends on residues His-303 and Lys-418.

This sequence belongs to the GPI family.

Its subcellular location is the cytoplasm. The catalysed reaction is alpha-D-glucose 6-phosphate = beta-D-fructose 6-phosphate. It functions in the pathway carbohydrate biosynthesis; gluconeogenesis. It participates in carbohydrate degradation; glycolysis; D-glyceraldehyde 3-phosphate and glycerone phosphate from D-glucose: step 2/4. Catalyzes the reversible isomerization of glucose-6-phosphate to fructose-6-phosphate. This Mesomycoplasma hyopneumoniae (strain J / ATCC 25934 / NCTC 10110) (Mycoplasma hyopneumoniae) protein is Glucose-6-phosphate isomerase.